A 153-amino-acid chain; its full sequence is Regulatory protein RecX (153 aa).

This sequence belongs to the RecX family.

The protein localises to the cytoplasm. Functionally, modulates RecA activity. The protein is Regulatory protein RecX of Syntrophotalea carbinolica (strain DSM 2380 / NBRC 103641 / GraBd1) (Pelobacter carbinolicus).